Reading from the N-terminus, the 390-residue chain is Magnesium-protoporphyrin IX monomethyl ester [oxidative] cyclase (390 aa).

This sequence belongs to the AcsF family. Fe cation is required as a cofactor.

It catalyses the reaction Mg-protoporphyrin IX 13-monomethyl ester + 3 NADPH + 3 O2 + 2 H(+) = 3,8-divinyl protochlorophyllide a + 3 NADP(+) + 5 H2O. Its pathway is porphyrin-containing compound metabolism; chlorophyll biosynthesis (light-independent). In terms of biological role, catalyzes the formation of the isocyclic ring in chlorophyll biosynthesis. Mediates the cyclase reaction, which results in the formation of divinylprotochlorophyllide (Pchlide) characteristic of all chlorophylls from magnesium-protoporphyrin IX 13-monomethyl ester (MgPMME). The chain is Magnesium-protoporphyrin IX monomethyl ester [oxidative] cyclase from Prochlorococcus marinus subsp. pastoris (strain CCMP1986 / NIES-2087 / MED4).